Consider the following 198-residue polypeptide: Ribonuclease HII (198 aa).

One can recognise an RNase H type-2 domain in the interval His-10 to Ser-198. A divalent metal cation contacts are provided by Asp-16, Glu-17, and Asp-108.

Belongs to the RNase HII family. The cofactor is Mn(2+). Mg(2+) serves as cofactor.

Its subcellular location is the cytoplasm. The enzyme catalyses Endonucleolytic cleavage to 5'-phosphomonoester.. Functionally, endonuclease that specifically degrades the RNA of RNA-DNA hybrids. In Cronobacter sakazakii (strain ATCC BAA-894) (Enterobacter sakazakii), this protein is Ribonuclease HII.